Reading from the N-terminus, the 526-residue chain is Na(+)/H(+) antiporter NhaB (526 aa).

Transmembrane regions (helical) follow at residues 14–34 (FLGY…LINP), 35–55 (LLFY…EFIF), 99–119 (MLLV…LFVF), 122–142 (LLLR…AAAF), 146–166 (FLDA…FYGI), 206–226 (LMMH…VGEP), 239–259 (FVDF…CGIL), 307–327 (AVIG…VGLI), 328–348 (GLSV…HAIG), 357–377 (FTAL…QQLF), 397–417 (YLFN…SVYI), 451–471 (ATPN…APLI), and 479–499 (VIMA…CVEF).

This sequence belongs to the NhaB Na(+)/H(+) (TC 2.A.34) antiporter family.

It is found in the cell inner membrane. The enzyme catalyses 2 Na(+)(in) + 3 H(+)(out) = 2 Na(+)(out) + 3 H(+)(in). In terms of biological role, na(+)/H(+) antiporter that extrudes sodium in exchange for external protons. In Pectobacterium atrosepticum (strain SCRI 1043 / ATCC BAA-672) (Erwinia carotovora subsp. atroseptica), this protein is Na(+)/H(+) antiporter NhaB.